The sequence spans 1266 residues: Rho GTPase-activating protein 29 (1266 aa).

Phosphoserine occurs at positions 166, 171, 174, and 185. The 271-residue stretch at 187-457 (IELDNLLLKN…SAKLYDPGQE (271 aa)) folds into the F-BAR domain. Residues 291 to 413 (RKNEMEKQRK…EILTQLRTLV (123 aa)) are a coiled coil. A phosphoserine mark is found at serine 496, serine 516, and serine 549. The span at 538-556 (SESTGGSSESRSLDSESIS) shows a compositional bias: low complexity. The disordered stretch occupies residues 538–596 (SESTGGSSESRSLDSESISPGDFHRKLPRTPSSGTMSSADDLDEREPPSPSEAGPNSLG). A Phorbol-ester/DAG-type zinc finger spans residues 609–654 (THKFRKLRSPTKCRDCEGIVMFPGVECEECLLVCHRKCLENLVIVC). A Rho-GAP domain is found at 668–883 (AEFIQVAKKE…FLITYAQKIF (216 aa)). Phosphoserine is present on residues serine 915, serine 951, and serine 1023. Disordered stretches follow at residues 1033–1054 (AGSP…KFGK), 1114–1153 (VSTG…DSCP), and 1222–1248 (VQTS…QRPR). Polar residues predominate over residues 1115–1127 (STGNNRGHSSGAA). Basic and acidic residues predominate over residues 1132–1148 (AHADPARSARDTSEHSS). 2 positions are modified to phosphoserine: serine 1149 and serine 1151. The interaction with PTPN13/PTPL1 stretch occupies residues 1263–1266 (PQFV).

Interacts with PTPN13/PTPL1. Interacts with RAP2A via its coiled coil domain. Interacts with RASIP1.

Its function is as follows. GTPase activator for the Rho-type GTPases by converting them to an inactive GDP-bound state. Has strong activity toward RHOA, and weaker activity toward RAC1 and CDC42. May act as a specific effector of RAP2A to regulate Rho. In concert with RASIP1, suppresses RhoA signaling and dampens ROCK and MYH9 activities in endothelial cells and plays an essential role in blood vessel tubulogenesis. The chain is Rho GTPase-activating protein 29 (Arhgap29) from Rattus norvegicus (Rat).